Reading from the N-terminus, the 232-residue chain is Charged multivesicular body protein 4c (232 aa).

2 disordered regions span residues 1–23 (MSKLGKFFKGTRSSRARAAPSAQ) and 177–232 (NKKM…AWAT). The segment at 1-153 (MSKLGKFFKG…EISEAFSQRV (153 aa)) is intramolecular interaction with C-terminus. Coiled-coil stretches lie at residues 21–45 (SAQEALARLRETEEMLAKKQEYLEN) and 125–185 (LNKI…SLEL). An intramolecular interaction with N-terminus region spans residues 154 to 232 (QFADGFDEAE…DFKQLAAWAT (79 aa)). A Phosphoserine; by AURKB modification is found at Ser210.

This sequence belongs to the SNF7 family. As to quaternary structure, probable core component of the endosomal sorting required for transport complex III (ESCRT-III). ESCRT-III components are thought to multimerize to form a flat lattice on the perimeter membrane of the endosome. Several assembly forms of ESCRT-III may exist that interact and act sequentially. Self-associates. Interacts with CHMP2A. Interacts with CHMP4A. Interacts with CHMP4B. Interacts with CHMP6. Interacts with VPS4A. Interacts with PDCD6IP; the interaction is direct. In terms of processing, phosphorylated at Ser-210 by AURKB during cytokinesis: together with ZFYVE19/ANCHR, phosphorylated CHMP4C retains abscission-competent VPS4 (VPS4A and/or VPS4B) at the midbody ring until abscission checkpoint signaling is terminated at late cytokinesis.

It is found in the cytoplasm. The protein localises to the cytosol. The protein resides in the late endosome membrane. It localises to the midbody. Its subcellular location is the midbody ring. Probable core component of the endosomal sorting required for transport complex III (ESCRT-III) which is involved in multivesicular bodies (MVBs) formation and sorting of endosomal cargo proteins into MVBs. MVBs contain intraluminal vesicles (ILVs) that are generated by invagination and scission from the limiting membrane of the endosome and mostly are delivered to lysosomes enabling degradation of membrane proteins, such as stimulated growth factor receptors, lysosomal enzymes and lipids. The MVB pathway appears to require the sequential function of ESCRT-O, -I,-II and -III complexes. ESCRT-III proteins mostly dissociate from the invaginating membrane before the ILV is released. The ESCRT machinery also functions in topologically equivalent membrane fission events, such as the terminal stages of cytokinesis. Key component of the cytokinesis checkpoint, a process required to delay abscission to prevent both premature resolution of intercellular chromosome bridges and accumulation of DNA damage: upon phosphorylation by AURKB, together with ZFYVE19/ANCHR, retains abscission-competent VPS4 (VPS4A and/or VPS4B) at the midbody ring until abscission checkpoint signaling is terminated at late cytokinesis. Deactivation of AURKB results in dephosphorylation of CHMP4C followed by its dissociation from ANCHR and VPS4 and subsequent abscission. ESCRT-III proteins are believed to mediate the necessary vesicle extrusion and/or membrane fission activities, possibly in conjunction with the AAA ATPase VPS4. CHMP4A/B/C are required for the exosomal release of SDCBP, CD63 and syndecan. This chain is Charged multivesicular body protein 4c (Chmp4c), found in Mus musculus (Mouse).